The sequence spans 521 residues: Amidase 1 (521 aa).

Residues Lys-112 and Ser-187 each act as charge relay system in the active site. Residues Ser-187 and 208–211 (IGGS) each bind substrate. The Acyl-ester intermediate role is filled by Ser-211.

It belongs to the amidase family.

It carries out the reaction a monocarboxylic acid amide + H2O = a monocarboxylate + NH4(+). The protein operates within xenobiotic degradation. Amidase; part of the Fusarium detoxification of benzoxazolinone cluster 1 (FDB1) involved in the degradation of benzoxazolinones produced by the host plant. Maize, wheat, and rye produce the 2 benzoxazinone phytoanticipins 2,4-dihy-droxy-7-methoxy-1,4-benzoxazin-3-one (DIMBOA) and 2,4-dihydroxy-1,4-benzoxazin-3-one (DIBOA) that, due to their inherent instability once released, spontaneously degrade to the more stable corresponding benzoxazolinones, 6-methoxy-2-benzoxazolinone (MBOA) and 2-benzoxazolinone (BOA), respectively. The first step in the detoxification of benzoxazolinones involves the hydrolysis of the cyclic ester bond of benzoxazolinones by the FDB1 cluster gamma-lactamase MBL1 to aminophenols. MBL1 is able to convert BOA into 2-aminophenol (2-AP), as well as MBOA into 5-methoxy-2-aminophenol (2-AMP). The FDB2 cluster N-malonyltransferase FDB2/NAT1 then metabolizes aminophenols via N-malonylation to non-toxic malonamic acids. FDB2/NAT1 converts 2-AP into N-(2-hydroxyphenyl) malonamic acid (HPMA) and 2-AMP into N-(2-hydroxy-4-methoxyphenyl) malonamic acid (HMPMA). The duplicated dienlactone hydrolases DLH1 and DLH2 may provide redundant function for hydrolyzing the lactone moiety in the BOA molecule. The roles of the amidases an other enzymes encoded by the 2 FDB clusters have not been identified so far. The sequence is that of Amidase 1 from Gibberella moniliformis (strain M3125 / FGSC 7600) (Maize ear and stalk rot fungus).